We begin with the raw amino-acid sequence, 233 residues long: uncharacterized protein (233 aa).

The chain crosses the membrane as a helical span at residues 21 to 41 (LNILIAIVSILIVVVAANLFI). A disordered region spans residues 44-163 (PSSKDVSKDS…GEHAATYDSS (120 aa)). Composition is skewed to basic and acidic residues over residues 48–57 (DVSKDSETAQ), 66–108 (KTEK…KKDD), and 135–144 (DVEKTYENPD).

Its subcellular location is the cell membrane. This is an uncharacterized protein from Bacillus subtilis (strain 168).